A 338-amino-acid polypeptide reads, in one-letter code: MKNTADITVLGAGSYGTALAISLASNGHRTLLWGHEPEHIANLKKDKCNNEFLPGIALPDLLIPEADLATALAASNNVLVVVPSHVFGSVLSQAKPLLRDDARIIWATKGLEPETGRLLQEVARDILGEHYPLAVLSGPTFAKELAAGLPTAISIAGTDVNFIKDLVELLHSPKRLRVYENDDFTGLQLGGAVKNVIAISAGMSDGIGFGANARTALITRGLVELTRLGEAIGAQGATFMGMAGLGDLVLTCTDNQSRNRRFGLALGKGLDVETAQQEIGQVVEGYRNTKEVYTLAKRLGVEMPITEQVYKVLYQGGTPHEAAKALLGRDQKSETPDS.

S14, Y15, H35, and K109 together coordinate NADPH. Positions 109, 138, and 140 each coordinate sn-glycerol 3-phosphate. A142 contributes to the NADPH binding site. Sn-glycerol 3-phosphate-binding residues include K194, D247, S257, R258, and N259. K194 functions as the Proton acceptor in the catalytic mechanism. R258 lines the NADPH pocket. Residues V282 and E284 each contribute to the NADPH site.

Belongs to the NAD-dependent glycerol-3-phosphate dehydrogenase family.

It localises to the cytoplasm. It carries out the reaction sn-glycerol 3-phosphate + NAD(+) = dihydroxyacetone phosphate + NADH + H(+). The catalysed reaction is sn-glycerol 3-phosphate + NADP(+) = dihydroxyacetone phosphate + NADPH + H(+). The protein operates within membrane lipid metabolism; glycerophospholipid metabolism. Functionally, catalyzes the reduction of the glycolytic intermediate dihydroxyacetone phosphate (DHAP) to sn-glycerol 3-phosphate (G3P), the key precursor for phospholipid synthesis. This chain is Glycerol-3-phosphate dehydrogenase [NAD(P)+], found in Shewanella sediminis (strain HAW-EB3).